Reading from the N-terminus, the 227-residue chain is uncharacterized protein (227 aa).

The N-terminal stretch at 1 to 22 (MDSVMRKSLFLLLPLVVTNAHA) is a signal peptide.

This is an uncharacterized protein from Salmonella typhi.